The chain runs to 163 residues: Protein LOL5 (163 aa).

Composition is skewed to polar residues over residues 1–25 (MSQL…QPQS) and 33–44 (LQPQHPPSSTAH). The interval 1–51 (MSQLPLASQATTTDLVSTTAMQPQSEGIVDESLQPQHPPSSTAHDSPCLQD) is disordered. 2 putative zinc finger regions span residues 70–100 (QMVC…MNYV) and 108–138 (KVHC…VTEI).

It is found in the nucleus. Its function is as follows. Involved in plant growth and disease resistance. This Oryza sativa subsp. japonica (Rice) protein is Protein LOL5 (LOL5).